A 210-amino-acid chain; its full sequence is Histone H1A (210 aa).

2 disordered regions span residues 1–49 (MAEA…VSEQ) and 101–210 (KGSG…PKKK). 2 stretches are compositionally biased toward low complexity: residues 26-45 (KKAA…SGPS) and 129-142 (PLAA…AAAK). Positions 42–113 (SGPSVSEQIV…GASGSFKLNK (72 aa)) constitute an H15 domain. 2 stretches are compositionally biased toward basic residues: residues 143 to 153 (KTAKSPKKPKK) and 160 to 180 (SPKK…KTAV). Positions 181 to 192 (KPKVAAKSPAKA) are enriched in low complexity. Residues 193–210 (KAAKPKVAKAKKAAPKKK) are compositionally biased toward basic residues.

It belongs to the histone H1/H5 family.

The protein resides in the nucleus. Its subcellular location is the chromosome. Histones H1 are necessary for the condensation of nucleosome chains into higher-order structures. The sequence is that of Histone H1A from Xenopus laevis (African clawed frog).